Consider the following 1159-residue polypeptide: DNA-directed RNA polymerase subunit beta (1159 aa).

Belongs to the RNA polymerase beta chain family. The RNAP catalytic core consists of 2 alpha, 1 beta, 1 beta' and 1 omega subunit. When a sigma factor is associated with the core the holoenzyme is formed, which can initiate transcription.

It carries out the reaction RNA(n) + a ribonucleoside 5'-triphosphate = RNA(n+1) + diphosphate. DNA-dependent RNA polymerase catalyzes the transcription of DNA into RNA using the four ribonucleoside triphosphates as substrates. This Deinococcus radiodurans (strain ATCC 13939 / DSM 20539 / JCM 16871 / CCUG 27074 / LMG 4051 / NBRC 15346 / NCIMB 9279 / VKM B-1422 / R1) protein is DNA-directed RNA polymerase subunit beta.